A 519-amino-acid polypeptide reads, in one-letter code: Cytochrome P450 monooxygenase FPY7 (519 aa).

The chain crosses the membrane as a helical span at residues 12-34; it reads SLSLRWKIIVTLLAIYTLRIIGT. Residue C465 coordinates heme.

It belongs to the cytochrome P450 family. It depends on heme as a cofactor.

It localises to the membrane. Its pathway is secondary metabolite biosynthesis. Functionally, cytochrome P450 monooxygenase; part of the gene cluster that mediates the biosynthesis of the gamma-pyrones fusapyrone (FPY) and deoxyfusapyrone (dFPY). FPY is an undecaketide and thus likely synthesized by the polyketide synthase FPY1 from acetyl-CoA functioning as starter unit and the addition of 10 malonyl-CoA extender units by successive Claisen-condensations. Next to this, FPY shares some rare features: C-glycosylated 4-deoxyglucose at C-3, a gem-dimethyl group at C-13, and an alpha-beta to beta-gamma double bond shift at C-20. During FPY biosynthesis mono-C-methyl groups are transferred to the tetra-, penta-, hexa- and heptaketide, while two C-methyl groups are transferred to the nonaketide, suggesting that the CMet domain is programmed to selectively catalyze two successive C-alpha-methylation reactions of the nonaketide, while other alpha-carbons are non- or mono-methylated only. While the origin of the 4'-deoxyglucose moiety remains opaque, its transfer to C-3 is most likely mediated by the C-glycosyltransferase FPY2. Next to this, the hydroxyl group present at C-33 and discriminating between FPY and dFPY, is likely to be installed by the cytochrome P450 monooxygenase FPY7. No putative function can be predicted for the remaining genes FPY3-FPY6. The protein is Cytochrome P450 monooxygenase FPY7 of Fusarium mangiferae (Mango malformation disease fungus).